The chain runs to 406 residues: Phosphopentomutase (406 aa).

Mn(2+) is bound by residues Asp10, Asp305, His310, Asp346, His347, and His358.

The protein belongs to the phosphopentomutase family. The cofactor is Mn(2+).

It localises to the cytoplasm. The enzyme catalyses 2-deoxy-alpha-D-ribose 1-phosphate = 2-deoxy-D-ribose 5-phosphate. It carries out the reaction alpha-D-ribose 1-phosphate = D-ribose 5-phosphate. Its pathway is carbohydrate degradation; 2-deoxy-D-ribose 1-phosphate degradation; D-glyceraldehyde 3-phosphate and acetaldehyde from 2-deoxy-alpha-D-ribose 1-phosphate: step 1/2. Isomerase that catalyzes the conversion of deoxy-ribose 1-phosphate (dRib-1-P) and ribose 1-phosphate (Rib-1-P) to deoxy-ribose 5-phosphate (dRib-5-P) and ribose 5-phosphate (Rib-5-P), respectively. The sequence is that of Phosphopentomutase from Aliivibrio salmonicida (strain LFI1238) (Vibrio salmonicida (strain LFI1238)).